Here is a 419-residue protein sequence, read N- to C-terminus: Ribosome biogenesis protein NOP53 (419 aa).

Disordered stretches follow at residues 1–21 and 233–283; these read MGIKERNAPSQYKQSSRKNKR and KAFE…KIRQ. Positions 233 to 261 are enriched in basic and acidic residues; the sequence is KAFEDKGLVSDQDVNHSIDSDDQSEHEQA. Serine 242, serine 249, serine 252, and serine 256 each carry phosphoserine. Residues 269-283 show a composition bias toward basic residues; the sequence is KNKRKTRSQRNKIRQ.

It belongs to the NOP53 family.

Its subcellular location is the nucleus. It is found in the nucleolus. The protein localises to the nucleoplasm. In terms of biological role, may play a role in ribosome biogenesis. This Schizosaccharomyces pombe (strain 972 / ATCC 24843) (Fission yeast) protein is Ribosome biogenesis protein NOP53.